The chain runs to 90 residues: Phosphocarrier protein NPr (90 aa).

The 89-residue stretch at 2–90 (TVKQTVEISN…ALFNAGFDED (89 aa)) folds into the HPr domain. Residue His16 is the Pros-phosphohistidine intermediate of the active site.

This sequence belongs to the HPr family.

Its subcellular location is the cytoplasm. Functionally, component of the phosphoenolpyruvate-dependent nitrogen-metabolic phosphotransferase system (nitrogen-metabolic PTS), that seems to be involved in regulating nitrogen metabolism. The phosphoryl group from phosphoenolpyruvate (PEP) is transferred to the phosphoryl carrier protein NPr by enzyme I-Ntr. Phospho-NPr then transfers it to EIIA-Ntr. Could function in the transcriptional regulation of sigma-54 dependent operons in conjunction with the NPr (PtsO) and EIIA-Ntr (PtsN) proteins. This chain is Phosphocarrier protein NPr (ptsO), found in Klebsiella oxytoca.